A 335-amino-acid polypeptide reads, in one-letter code: Succinylglutamate desuccinylase (335 aa).

Zn(2+)-binding residues include His-59, Glu-62, and His-151. Residue Glu-215 is part of the active site.

It belongs to the AspA/AstE family. Succinylglutamate desuccinylase subfamily. The cofactor is Zn(2+).

The catalysed reaction is N-succinyl-L-glutamate + H2O = L-glutamate + succinate. The protein operates within amino-acid degradation; L-arginine degradation via AST pathway; L-glutamate and succinate from L-arginine: step 5/5. Functionally, transforms N(2)-succinylglutamate into succinate and glutamate. This chain is Succinylglutamate desuccinylase, found in Pseudomonas putida (strain ATCC 47054 / DSM 6125 / CFBP 8728 / NCIMB 11950 / KT2440).